The chain runs to 215 residues: Deoxyadenosine kinase (215 aa).

9–17 (GPIGAGKSS) is an ATP binding site. Substrate-binding residues include E33, Y45, and N56. The active-site Proton acceptor is the D79. Substrate-binding residues include R80, D85, and E150.

It belongs to the DCK/DGK family. As to quaternary structure, heterodimer of a deoxyadenosine (DAK) and a deoxyguanosine kinase (DGK).

The catalysed reaction is 2'-deoxyadenosine + ATP = dAMP + ADP + H(+). Functionally, DGK/DAK plays an essential role in generating the deoxyribonucleotide precursors, dGTP and dATP, for DNA metabolism. The chain is Deoxyadenosine kinase from Lactobacillus acidophilus (strain ATCC 700396 / NCK56 / N2 / NCFM).